The sequence spans 421 residues: Phosphoribosylamine--glycine ligase (421 aa).

The 207-residue stretch at 108–314 (KEIMVKYNVP…FAQNIDDIMM (207 aa)) folds into the ATP-grasp domain. An ATP-binding site is contributed by 134–195 (IEEQGAPIVV…EEFLDGEEFS (62 aa)). Positions 284 and 286 each coordinate Mg(2+).

This sequence belongs to the GARS family. It depends on Mg(2+) as a cofactor. The cofactor is Mn(2+).

It catalyses the reaction 5-phospho-beta-D-ribosylamine + glycine + ATP = N(1)-(5-phospho-beta-D-ribosyl)glycinamide + ADP + phosphate + H(+). The protein operates within purine metabolism; IMP biosynthesis via de novo pathway; N(1)-(5-phospho-D-ribosyl)glycinamide from 5-phospho-alpha-D-ribose 1-diphosphate: step 2/2. In Streptococcus pyogenes serotype M3 (strain SSI-1), this protein is Phosphoribosylamine--glycine ligase.